We begin with the raw amino-acid sequence, 252 residues long: Tumor necrosis factor ligand superfamily member 15 (252 aa).

Topologically, residues 1 to 39 (MAEELGLGFGEAVPVEMLPEGCRHRREARTGLAARSKAC) are cytoplasmic. The chain crosses the membrane as a helical; Signal-anchor for type II membrane protein span at residues 40–60 (LALTCCLLSFPILAGLSTLLM). At 61–252 (TGQLRIPGKD…DKTFFGAFLI (192 aa)) the chain is on the extracellular side. The region spanning 96-252 (PKAHLTIMRQ…DKTFFGAFLI (157 aa)) is the THD domain. N-linked (GlcNAc...) asparagine glycosylation occurs at Asn-134. Cys-163 and Cys-203 are joined by a disulfide. A glycan (N-linked (GlcNAc...) asparagine) is linked at Asn-230.

Belongs to the tumor necrosis factor family. As to quaternary structure, homotrimer.

It is found in the membrane. Its function is as follows. Receptor for TNFRSF25 and TNFRSF6B. Mediates activation of NF-kappa-B. Inhibits vascular endothelial growth and angiogenesis (in vitro). Promotes activation of caspases and apoptosis. Promotes splenocyte alloactivation. This chain is Tumor necrosis factor ligand superfamily member 15 (Tnfsf15), found in Rattus norvegicus (Rat).